A 213-amino-acid chain; its full sequence is Ribosomal RNA small subunit methyltransferase G (213 aa).

S-adenosyl-L-methionine contacts are provided by residues glycine 77, phenylalanine 82, 130 to 131 (IE), and arginine 146.

It belongs to the methyltransferase superfamily. RNA methyltransferase RsmG family.

The protein resides in the cytoplasm. It carries out the reaction guanosine(527) in 16S rRNA + S-adenosyl-L-methionine = N(7)-methylguanosine(527) in 16S rRNA + S-adenosyl-L-homocysteine. In terms of biological role, specifically methylates the N7 position of guanine in position 527 of 16S rRNA. The chain is Ribosomal RNA small subunit methyltransferase G from Bartonella tribocorum (strain CIP 105476 / IBS 506).